The chain runs to 2328 residues: Genome polyprotein (2328 aa).

Residues 1-201 enclose the Peptidase C28 domain; it reads MNTTDCFIAL…WKANVQRKLK (201 aa). Residues 1–1476 are Cytoplasmic-facing; the sequence is MNTTDCFIAL…SFVKRAFKRL (1476 aa). Catalysis depends on for leader protease activity residues Cys-51, His-148, and Asp-163. Disordered stretches follow at residues 199–218 and 238–265; these read KLKGAGQSSPATGSQNQSGN and QLGDNAISGGSNEGSTDTTSTHTTNTQN. Gly-202 carries N-myristoyl glycine; by host lipidation. 2 stretches are compositionally biased toward polar residues: residues 204–218 and 238–251; these read GQSSPATGSQNQSGN and QLGDNAISGGSNEG. A compositionally biased stretch (low complexity) spans 252–265; the sequence is STDTTSTHTTNTQN. An antigenic epitope region spans residues 787 to 795; the sequence is ALLRAATYY. The Cell attachment site motif lies at 865–867; sequence RGD. Residues 1185–1349 form the SF3 helicase domain; it reads NTHIANLCKV…DGYKINNKLD (165 aa). ATP is bound at residue 1213-1220; it reads GKSGQGKS. The stretch at 1477-1497 is an intramembrane region; it reads KENFEIVALCLTLLANIVIMI. At 1498–2328 the chain is on the cytoplasmic side; sequence RETRKRQQMV…RWVNAVCGDA (831 aa). 2 stretches are compositionally biased toward basic and acidic residues: residues 1525–1534 and 1545–1559; these read KTLDEAEKNP and FRERTLPGHKARDDV. Residues 1525-1580 form a disordered region; sequence KTLDEAEKNPLETSGASTVGFRERTLPGHKARDDVNSEPAQPVEEQPQAEGPYAGP. Residues Tyr-1577, Tyr-1600, and Tyr-1624 each carry the O-(5'-phospho-RNA)-tyrosine modification. The region spanning 1648 to 1844 is the Peptidase C3 domain; the sequence is APPTDLQKMV…YCSCVSRSML (197 aa). Catalysis depends on His-1691, which acts as the For protease 3C activity; Proton donor/acceptor. Active-site for protease 3C activity residues include Asp-1729 and Cys-1808. The short motif at 1874–1882 is the Nuclear localization signal element; that stretch reads MRKTKLAPT. The RdRp catalytic domain occupies 2092 to 2210; it reads RNVWDVDYSA…ASDYDLDFEA (119 aa). Asp-2196 serves as the catalytic For RdRp activity.

This sequence belongs to the picornaviruses polyprotein family. Interacts with host ISG15. As to quaternary structure, interacts (via R-G-D motif) with host ITGAV/ITGB6. Interacts with host MAVS; this interaction inhibits binding of host TRAF3 to MAVS, thereby suppressing interferon-mediated responses. In terms of assembly, forms homooligomers. Homohexamer. Interacts with host VIM. Interacts with host BECN1. As to quaternary structure, interacts with host DCTN3. In terms of assembly, interacts with RNA-dependent RNA polymerase; this interaction allows 3B-1 to binds 2 polymerases and act as a primer. It also allows the recruitment of the RNA-dependent RNA polymerase to host membranes. Interacts with RNA-dependent RNA polymerase; this interaction allows 3B-2 to act as a primer. As to quaternary structure, interacts with RNA-dependent RNA polymerase; this interaction allows 3B-3 to act as a primer. In terms of assembly, interacts with 3B-1; this interaction allows 3B-1 to binds 2 polymerases and act as a primer. It also allows the recruitment of the RNA-dependent RNA polymerase to host membranes. Interacts with 3B-2; this interaction allows 3B-2 to act as a primer. Interacts with 3B-3; this interaction allows 3B-3 to act as a primer. In terms of processing, removes six residues from its own C-terminus, generating sLb(pro). Post-translationally, specific enzymatic cleavages in vivo by the viral proteases yield a variety of precursors and mature proteins. The polyprotein seems to be cotranslationally cleaved at the 2A/2B junction by a ribosomal skip from one codon to the next without formation of a peptide bond. This process would release the L-P1-2A peptide from the translational complex. During virion maturation, immature virions are rendered infectious following cleavage of VP0 into VP4 and VP2. This maturation seems to be an autocatalytic event triggered by the presence of RNA in the capsid and is followed by a conformational change of the particle. In terms of processing, myristoylation is required during RNA encapsidation and formation of the mature virus particle. Post-translationally, uridylylated by the polymerase and covalently linked to the 5'-end of genomic RNA. These uridylylated forms act as a nucleotide-peptide primer for the polymerase.

It localises to the host nucleus. Its subcellular location is the host cytoplasm. The protein localises to the virion. The protein resides in the host endoplasmic reticulum membrane. It is found in the host cytoplasmic vesicle membrane. It catalyses the reaction Autocatalytically cleaves itself from the polyprotein of the foot-and-mouth disease virus by hydrolysis of a Lys-|-Gly bond, but then cleaves host cell initiation factor eIF-4G at bonds -Gly-|-Arg- and -Lys-|-Arg-.. The catalysed reaction is a ribonucleoside 5'-triphosphate + H2O = a ribonucleoside 5'-diphosphate + phosphate + H(+). It carries out the reaction RNA(n) + a ribonucleoside 5'-triphosphate = RNA(n+1) + diphosphate. The enzyme catalyses Selective cleavage of Gln-|-Gly bond in the poliovirus polyprotein. In other picornavirus reactions Glu may be substituted for Gln, and Ser or Thr for Gly.. Its function is as follows. Autocatalytically cleaves itself from the polyprotein at the L/VP0 junction. Also cleaves the host translation initiation factors EIF4G1 and EIF4G3, in order to shut off the capped cellular mRNA transcription. Plays a role in counteracting host innate antiviral response using diverse mechanisms. Possesses a deubiquitinase activity acting on both 'Lys-48' and 'Lys-63'-linked polyubiquitin chains. In turn, inhibits the ubiquitination and subsequent activation of key signaling molecules of type I IFN response such as host RIGI, TBK1, TRAF3 and TRAF6. Inhibits host NF-kappa-B activity by inducing a decrease in RELA mRNA levels. Cleaves a peptide bond in the C-terminus of host ISG15, resulting in the damaging of this modifier that can no longer be attached to target proteins. Also cleaves host G3BP1 and G3BP2 in order to inhibit cytoplasmic stress granules assembly. In terms of biological role, lies on the inner surface of the capsid shell. After binding to the host receptor, the capsid undergoes conformational changes. Capsid protein VP4 is released, capsid protein VP1 N-terminus is externalized, and together, they shape a pore in the host membrane through which the viral genome is translocated into the host cell cytoplasm. After genome has been released, the channel shrinks. Forms an icosahedral capsid of pseudo T=3 symmetry with capsid proteins VP1 and VP3. The capsid is composed of 60 copies of each capsid protein organized in the form of twelve pentamers and encloses the viral positive strand RNA genome. Upon acidifcation in the endosome, dissociates into pentamers. Functionally, forms an icosahedral capsid of pseudo T=3 symmetry with capsid proteins VP0 and VP3. The capsid is composed of 60 copies of each capsid protein organized in the form of twelve pentamers and encloses the viral positive strand RNA genome. Upon acidifcation in the endosome, dissociates into pentamers. Its function is as follows. Forms an icosahedral capsid of pseudo T=3 symmetry with capsid proteins VP2 and VP3. The capsid is composed of 60 copies of each capsid protein organized in the form of twelve pentamers and encloses the viral positive strand RNA genome. Mediates cell entry by attachment to an integrin receptor, usually host ITGAV/ITGB6. In addition, targets host MAVS to suppress type I IFN pathway. Upon acidifcation in the endosome, dissociates into pentamers. In terms of biological role, mediates self-processing of the polyprotein by a translational effect termed 'ribosome skipping'. Mechanistically, 2A-mediated cleavage occurs between the C-terminal glycine and the proline of the downstream protein 2B. In the case of foot-and-mouth disease virus, the 2A oligopeptide is post-translationally 'trimmed' from the C-terminus of the upstream protein 1D by 3C proteinase. Plays an essential role in the virus replication cycle by acting as a viroporin. Creates a pore in the host endoplasmic reticulum and as a consequence releases Ca2+ in the cytoplasm of infected cell. In turn, high levels of cytoplasmic calcium may trigger membrane trafficking and transport of viral ER-associated proteins to viroplasms, sites of viral genome replication. Functionally, associates with and induces structural rearrangements of intracellular membranes. Triggers host autophagy by interacting with host BECN1 and thereby promotes viral replication. Participates in viral replication and interacts with host DHX9. Displays RNA-binding, nucleotide binding and NTPase activities. May play a role in virion morphogenesis and viral RNA encapsidation by interacting with the capsid protein VP3. Its function is as follows. Plays important roles in virus replication, virulence and host range. Cooperates with host DDX56 to inhibit IRF3 nuclear translocation and subsequent type I interferon production. In terms of biological role, covalently linked to the 5'-end of both the positive-strand and negative-strand genomic RNAs. Acts as a genome-linked replication primer. Cysteine protease that generates mature viral proteins from the precursor polyprotein. In addition to its proteolytic activity, binds to viral RNA and thus influences viral genome replication. RNA and substrate bind cooperatively to the protease. Functionally, RNA-directed RNA polymerase 3D-POL replicates genomic and antigenomic RNA by recognizing replications specific signals. Covalently attaches UMP to a tyrosine of VPg, which is used to prime RNA synthesis. The positive stranded RNA genome is first replicated at virus induced membranous vesicles, creating a dsRNA genomic replication form. This dsRNA is then used as template to synthesize positive stranded RNA genomes. ss(+)RNA genomes are either translated, replicated or encapsidated. The chain is Genome polyprotein from Bos taurus (Bovine).